The sequence spans 348 residues: Beta-hexosaminidase (348 aa).

Substrate-binding positions include aspartate 64, arginine 72, arginine 138, and 168-169; that span reads KH. The active-site Proton donor/acceptor is histidine 181. The Nucleophile role is filled by aspartate 252.

The protein belongs to the glycosyl hydrolase 3 family. NagZ subfamily.

The protein resides in the cytoplasm. It carries out the reaction Hydrolysis of terminal non-reducing N-acetyl-D-hexosamine residues in N-acetyl-beta-D-hexosaminides.. Its pathway is cell wall biogenesis; peptidoglycan recycling. In terms of biological role, plays a role in peptidoglycan recycling by cleaving the terminal beta-1,4-linked N-acetylglucosamine (GlcNAc) from peptide-linked peptidoglycan fragments, giving rise to free GlcNAc, anhydro-N-acetylmuramic acid and anhydro-N-acetylmuramic acid-linked peptides. The protein is Beta-hexosaminidase of Nitrosomonas eutropha (strain DSM 101675 / C91 / Nm57).